The sequence spans 110 residues: MSLSEARFHDLVDATQQALEDLFDESGLDLDMENSAGVLTIKFDNGSQLIFSRQEPLRQLWLADRSGGFHFDYDEESGKWVCEKSEELLGEMLERIVWERAGEKLDFDEI.

This sequence belongs to the frataxin family.

Functionally, involved in iron-sulfur (Fe-S) cluster assembly. May act as a regulator of Fe-S biogenesis. The protein is Iron-sulfur cluster assembly protein CyaY of Pseudomonas putida (strain W619).